We begin with the raw amino-acid sequence, 152 residues long: Endoribonuclease YbeY (152 aa).

His111, His115, and His121 together coordinate Zn(2+).

It belongs to the endoribonuclease YbeY family. It depends on Zn(2+) as a cofactor.

It is found in the cytoplasm. Functionally, single strand-specific metallo-endoribonuclease involved in late-stage 70S ribosome quality control and in maturation of the 3' terminus of the 16S rRNA. This chain is Endoribonuclease YbeY, found in Pseudomonas fluorescens (strain ATCC BAA-477 / NRRL B-23932 / Pf-5).